Consider the following 200-residue polypeptide: Large ribosomal subunit protein uL4 (200 aa).

Positions 43-71 (RAQKTRAEVSGSGKKPWRQKGTGRARSGD) are disordered.

It belongs to the universal ribosomal protein uL4 family. Part of the 50S ribosomal subunit.

In terms of biological role, one of the primary rRNA binding proteins, this protein initially binds near the 5'-end of the 23S rRNA. It is important during the early stages of 50S assembly. It makes multiple contacts with different domains of the 23S rRNA in the assembled 50S subunit and ribosome. Functionally, forms part of the polypeptide exit tunnel. This Pasteurella multocida (strain Pm70) protein is Large ribosomal subunit protein uL4.